Reading from the N-terminus, the 1396-residue chain is uncharacterized protein (1396 aa).

88 to 95 (AYKKWGRS) is a binding site for ATP. Disordered regions lie at residues 146-165 (EKIH…LSPT) and 198-388 (KPCS…VKDL). Over residues 198–221 (KPCSYSSSSSSSTVPPASTDTSSP) the composition is skewed to low complexity. A compositionally biased stretch (basic and acidic residues) spans 242–268 (MHEKAQSRSRHEKESKLSSSTIEEKPA). Over residues 286 to 300 (SWSSGSSEAGSSSSG) the composition is skewed to low complexity. Residues 312 to 327 (VKVRHKAREIRNRKGR) are compositionally biased toward basic residues. Residues Ser817 and Ser1083 each carry the phosphoserine modification. A disordered region spans residues 1113-1137 (PISASELSPGGGSESEFESEKDEAS). Ser1197 and Ser1339 each carry phosphoserine. Positions 1347-1396 (TGERGSETKPNGLHRKMCSSASSDTGDTGSEAGGEWVGPSREELFSRTHL) are disordered. The segment covering 1365–1376 (SSASSDTGDTGS) has biased composition (low complexity). Residues 1386–1396 (SREELFSRTHL) show a composition bias toward basic and acidic residues.

This is an uncharacterized protein from Mus musculus (Mouse).